Reading from the N-terminus, the 313-residue chain is tRNA pseudouridine synthase B (313 aa).

Residue D42 is the Nucleophile of the active site.

Belongs to the pseudouridine synthase TruB family. Type 1 subfamily.

It carries out the reaction uridine(55) in tRNA = pseudouridine(55) in tRNA. Its function is as follows. Responsible for synthesis of pseudouridine from uracil-55 in the psi GC loop of transfer RNAs. In Prochlorococcus marinus (strain SARG / CCMP1375 / SS120), this protein is tRNA pseudouridine synthase B.